The primary structure comprises 915 residues: MFNCAVTAIDLTPMPLLSTDNMTTAPLSLSTDTSLIEKSLFGIPEWLLQINDDISRALERGVNIRQLVSARACVIDDLLIGLFKWFELDKTDLALFATGGYGRGELSLHSDIDILLLMPHEIDADTSSKIDNLVALLWDIGLEPALSVRSVSECLEAALDHTIASALLEARLLIGNETLQDVPHQIVNNQWSPRAFYDVKIDEAKARYLQHNATEYNLEPNIKTAPGGLRDIHIVGWVTKRYFRVSKLYDLVQQNFLTEKEFDELSFSEGYLWQIRHYLHELTGRNENKLLFDYQREIAQLMGYDTQPDDQPNAAVERFMRDYYRCAMQISTLSEMLTNHYYETIIEPQLPDEERPKKQPINARFNQVGEQIAMAHHRVFAQHPESILEMFLLMGQYGIKNVRTHTLRALKIAARGIDQAYRDNPTHQTLFLANLKEQNYLFHRLRTMNRYGVLGNYIPAFAQVTGLMQYDLFHRYTVDAHTLFLIRILHRFIDPHFYEDFPLVSSIFQRIERKEILVLAAMFHDIAKGRGGNHSQLGEIESIEFCLAHGMSNADANLVGWLTRYHLLMSMTAQKKDISDPEVVTLFADLVGNVTHLNHLYVLTVADMNATNPQLWNSWRATLMKQLYSQTRRILRADIDAPTNRQDMISATRKQALMMLDNVDNQHMNRDEVLSLWDDLGDEYFLREIAEDILWHTEAILNHPPIGRASNADSPPLVVLREHRELALDAVQVFVYTQDQVNLFAVTMAVFDQMNLDVLDARIITATRDFALDSYVLLDRSGTLLVDSDSQQELKQRLIDAFKNPTAPKLTHKRIPRQLKHFDVETTINFEFNDASSQHIMSLETLDQPGLLARVGQVFLQQQIEVHAARITTLGERAEDMFYISDQNDQALSANKLKTLKTALIESLSVHNDSI.

Residues 1–360 (MFNCAVTAID…PDEERPKKQP (360 aa)) form a uridylyltransferase region. Positions 361 to 731 (INARFNQVGE…EHRELALDAV (371 aa)) are uridylyl-removing. In terms of domain architecture, HD spans 478-594 (VDAHTLFLIR…TLFADLVGNV (117 aa)). 2 consecutive ACT domains span residues 732–817 (QVFV…RIPR) and 840–915 (IMSL…NDSI).

The protein belongs to the GlnD family. It depends on Mg(2+) as a cofactor.

It carries out the reaction [protein-PII]-L-tyrosine + UTP = [protein-PII]-uridylyl-L-tyrosine + diphosphate. It catalyses the reaction [protein-PII]-uridylyl-L-tyrosine + H2O = [protein-PII]-L-tyrosine + UMP + H(+). With respect to regulation, uridylyltransferase (UTase) activity is inhibited by glutamine, while glutamine activates uridylyl-removing (UR) activity. Functionally, modifies, by uridylylation and deuridylylation, the PII regulatory proteins (GlnB and homologs), in response to the nitrogen status of the cell that GlnD senses through the glutamine level. Under low glutamine levels, catalyzes the conversion of the PII proteins and UTP to PII-UMP and PPi, while under higher glutamine levels, GlnD hydrolyzes PII-UMP to PII and UMP (deuridylylation). Thus, controls uridylylation state and activity of the PII proteins, and plays an important role in the regulation of nitrogen assimilation and metabolism. This chain is Bifunctional uridylyltransferase/uridylyl-removing enzyme, found in Psychrobacter arcticus (strain DSM 17307 / VKM B-2377 / 273-4).